The primary structure comprises 78 residues: Hainantoxin-XX (78 aa).

The signal sequence occupies residues 1–23; the sequence is MKSATLLALSFLLIALYFLICEA. A propeptide spanning residues 24–47 is cleaved from the precursor; the sequence is EHSRYEEHEILEENMGDVVNLEQR. 3 cysteine pairs are disulfide-bonded: cysteine 49–cysteine 62, cysteine 56–cysteine 66, and cysteine 61–cysteine 77.

This sequence belongs to the hainantoxin family. 20 subfamily. As to expression, expressed by the venom gland.

The protein localises to the secreted. Putative ion channel inhibitor. The protein is Hainantoxin-XX of Cyriopagopus hainanus (Chinese bird spider).